A 105-amino-acid chain; its full sequence is Small ribosomal subunit protein bS18 (105 aa).

Over residues 1–10 (MAEETNQQAP) the composition is skewed to polar residues. A disordered region spans residues 1-34 (MAEETNQQAPESGASSSQPTSRPSGPRGGSGGRK). Low complexity predominate over residues 12 to 25 (SGASSSQPTSRPSG).

The protein belongs to the bacterial ribosomal protein bS18 family. In terms of assembly, part of the 30S ribosomal subunit. Forms a tight heterodimer with protein bS6.

Functionally, binds as a heterodimer with protein bS6 to the central domain of the 16S rRNA, where it helps stabilize the platform of the 30S subunit. This is Small ribosomal subunit protein bS18 from Acidobacterium capsulatum (strain ATCC 51196 / DSM 11244 / BCRC 80197 / JCM 7670 / NBRC 15755 / NCIMB 13165 / 161).